The sequence spans 246 residues: Probable S-methyl-5'-thioinosine phosphorylase (246 aa).

Phosphate contacts are provided by residues Thr-10 and 52–53 (RH). Position 185 (Met-185) interacts with substrate. Residue Thr-186 coordinates phosphate. 209-211 (NPA) contributes to the substrate binding site.

It belongs to the PNP/MTAP phosphorylase family. MTAP subfamily. As to quaternary structure, homotrimer.

It carries out the reaction S-methyl-5'-thioinosine + phosphate = 5-(methylsulfanyl)-alpha-D-ribose 1-phosphate + hypoxanthine. The protein operates within purine metabolism; purine nucleoside salvage. Catalyzes the reversible phosphorylation of S-methyl-5'-thioinosine (MTI) to hypoxanthine and 5-methylthioribose-1-phosphate. Involved in the breakdown of S-methyl-5'-thioadenosine (MTA), a major by-product of polyamine biosynthesis. Catabolism of (MTA) occurs via deamination to MTI and phosphorolysis to hypoxanthine. In Pseudomonas syringae pv. tomato (strain ATCC BAA-871 / DC3000), this protein is Probable S-methyl-5'-thioinosine phosphorylase.